A 142-amino-acid polypeptide reads, in one-letter code: Hemoglobin subunit alpha-4 (142 aa).

The residue at position 1 (S1) is an N-acetylserine. Residues 1–142 (SLSAKDKANV…LALALAEKYR (142 aa)) form the Globin domain. H59 serves as a coordination point for O2. A heme b-binding site is contributed by H88.

This sequence belongs to the globin family. As to quaternary structure, heterotetramer of two alpha chains and two beta chains. Red blood cells.

Its function is as follows. Involved in oxygen transport from gills to the various peripheral tissues. This is Hemoglobin subunit alpha-4 (hba4) from Oncorhynchus mykiss (Rainbow trout).